The following is a 236-amino-acid chain: ATP phosphoribosyltransferase (236 aa).

Belongs to the ATP phosphoribosyltransferase family. Short subfamily. In terms of assembly, heteromultimer composed of HisG and HisZ subunits.

It localises to the cytoplasm. The catalysed reaction is 1-(5-phospho-beta-D-ribosyl)-ATP + diphosphate = 5-phospho-alpha-D-ribose 1-diphosphate + ATP. The protein operates within amino-acid biosynthesis; L-histidine biosynthesis; L-histidine from 5-phospho-alpha-D-ribose 1-diphosphate: step 1/9. In terms of biological role, catalyzes the condensation of ATP and 5-phosphoribose 1-diphosphate to form N'-(5'-phosphoribosyl)-ATP (PR-ATP). Has a crucial role in the pathway because the rate of histidine biosynthesis seems to be controlled primarily by regulation of HisG enzymatic activity. The protein is ATP phosphoribosyltransferase (hisG) of Cereibacter sphaeroides (strain ATCC 17023 / DSM 158 / JCM 6121 / CCUG 31486 / LMG 2827 / NBRC 12203 / NCIMB 8253 / ATH 2.4.1.) (Rhodobacter sphaeroides).